We begin with the raw amino-acid sequence, 841 residues long: Probable inorganic carbon transporter subunit DabA 1 (841 aa).

Zn(2+) contacts are provided by Cys352, Asp354, His536, and Cys551.

It belongs to the inorganic carbon transporter (TC 9.A.2) DabA family. As to quaternary structure, forms a complex with DabB. The cofactor is Zn(2+).

It is found in the cell inner membrane. In terms of biological role, part of an energy-coupled inorganic carbon pump. In Bradyrhizobium sp. (strain ORS 278), this protein is Probable inorganic carbon transporter subunit DabA 1.